The primary structure comprises 215 residues: Ribonuclease T (215 aa).

The region spanning 20–194 (VVIDVETAGF…YDTMQTAKLF (175 aa)) is the Exonuclease domain. Mg(2+) contacts are provided by aspartate 23, glutamate 25, histidine 181, and aspartate 186. The active-site Proton donor/acceptor is histidine 181.

It belongs to the RNase T family. Homodimer. Mg(2+) serves as cofactor.

Trims short 3' overhangs of a variety of RNA species, leaving a one or two nucleotide 3' overhang. Responsible for the end-turnover of tRNA: specifically removes the terminal AMP residue from uncharged tRNA (tRNA-C-C-A). Also appears to be involved in tRNA biosynthesis. In Yersinia enterocolitica serotype O:8 / biotype 1B (strain NCTC 13174 / 8081), this protein is Ribonuclease T.